The primary structure comprises 1630 residues: Probable phosphoinositide phosphatase SAC9 (1630 aa).

One can recognise an SAC domain in the interval 147-527 (LTELDIDGKH…ADAVTGKSYY (381 aa)). A Phosphatase catalytic core; degenerate motif is present at residues 456–467 (RFNCADSLDRTN). Positions 508–542 (APLPPGWEKRADAVTGKSYYIDHNTKTTTWSHPCP) constitute a WW domain.

Ubiquitous. Most abundant in the roots with lower expression levels throughout the leaves and shoot.

Its function is as follows. Probable phosphoinositide phosphatase that could be involved in stress signaling. This Arabidopsis thaliana (Mouse-ear cress) protein is Probable phosphoinositide phosphatase SAC9 (SAC9).